The chain runs to 119 residues: Large ribosomal subunit protein bL20 (119 aa).

Belongs to the bacterial ribosomal protein bL20 family.

In terms of biological role, binds directly to 23S ribosomal RNA and is necessary for the in vitro assembly process of the 50S ribosomal subunit. It is not involved in the protein synthesizing functions of that subunit. The chain is Large ribosomal subunit protein bL20 from Brevibacillus brevis (strain 47 / JCM 6285 / NBRC 100599).